We begin with the raw amino-acid sequence, 270 residues long: 5'-AMP-activated protein kinase subunit beta-1 (270 aa).

The disordered stretch occupies residues Met1–Asp43. The N-myristoyl glycine moiety is linked to residue Gly2. A Phosphothreonine modification is found at Thr4. 2 positions are modified to phosphoserine: Ser5 and Ser6. Position 19 is a phosphothreonine (Thr19). Positions Arg21–Ile36 are enriched in basic and acidic residues. A phosphoserine; by autocatalysis mark is found at Ser24 and Ser25. Phosphoserine occurs at positions 40, 96, 101, and 108. A glycogen-binding domain region spans residues Glu68 to Phe163. Residue Thr148 is modified to Phosphothreonine. Ser182 carries the post-translational modification Phosphoserine.

The protein belongs to the 5'-AMP-activated protein kinase beta subunit family. As to quaternary structure, AMPK is a heterotrimer of an alpha catalytic subunit (PRKAA1 or PRKAA2), a beta (PRKAB1 or PRKAB2) and a gamma non-catalytic subunits (PRKAG1, PRKAG2 or PRKAG3). Interacts with FNIP1 and FNIP2. In terms of processing, phosphorylated when associated with the catalytic subunit (PRKAA1 or PRKAA2). Phosphorylated by ULK1; leading to negatively regulate AMPK activity and suggesting the existence of a regulatory feedback loop between ULK1 and AMPK.

Non-catalytic subunit of AMP-activated protein kinase (AMPK), an energy sensor protein kinase that plays a key role in regulating cellular energy metabolism. In response to reduction of intracellular ATP levels, AMPK activates energy-producing pathways and inhibits energy-consuming processes: inhibits protein, carbohydrate and lipid biosynthesis, as well as cell growth and proliferation. AMPK acts via direct phosphorylation of metabolic enzymes, and by longer-term effects via phosphorylation of transcription regulators. Also acts as a regulator of cellular polarity by remodeling the actin cytoskeleton; probably by indirectly activating myosin. Beta non-catalytic subunit acts as a scaffold on which the AMPK complex assembles, via its C-terminus that bridges alpha (PRKAA1 or PRKAA2) and gamma subunits (PRKAG1, PRKAG2 or PRKAG3). This is 5'-AMP-activated protein kinase subunit beta-1 (PRKAB1) from Homo sapiens (Human).